The sequence spans 86 residues: Large ribosomal subunit protein bL31B (86 aa).

The protein belongs to the bacterial ribosomal protein bL31 family. Type B subfamily. Part of the 50S ribosomal subunit.

The sequence is that of Large ribosomal subunit protein bL31B from Burkholderia lata (strain ATCC 17760 / DSM 23089 / LMG 22485 / NCIMB 9086 / R18194 / 383).